An 829-amino-acid polypeptide reads, in one-letter code: Potassium voltage-gated channel unc-103 (829 aa).

The interval 1–76 is disordered; sequence MKTAVFGRDS…PRASHSSRRT (76 aa). Residues 1 to 123 are Cytoplasmic-facing; it reads MKTAVFGRDS…YSPFKAVWDW (123 aa). Gly residues predominate over residues 46-66; that stretch reads GVSGTGGGGSGGLQGAPGAGG. Residues 124–144 traverse the membrane as a helical segment; it reads IILLLVIYTAVFTPYVAAFLL. Residues 145–158 are Extracellular-facing; the sequence is RELQDTAKKSRFTE. The helical transmembrane segment at 159–179 threads the bilayer; that stretch reads PLEIVDLIVDIMFIVDIIINF. Residues 180–203 are Cytoplasmic-facing; that stretch reads RTTYVNENDEACQVVSDPGKIATH. Residues 204-224 form a helical membrane-spanning segment; it reads YFKGWFIIDMVAAVPFDLLLV. The Extracellular portion of the chain corresponds to 225 to 234; that stretch reads STNSDETTTL. Residues 235–255 traverse the membrane as a helical; Voltage-sensor segment; sequence IGLLKTARLLRLVRVARKLDR. Topologically, residues 256–261 are cytoplasmic; sequence YSEYGA. The helical transmembrane segment at 262 to 282 threads the bilayer; the sequence is AVLLLLMATFALIAHWLACIW. Over 283–327 the chain is Extracellular; it reads YAIGSAELSHKEYTWLHQLSKQLAQPYTSTNGTIPTGGPTLKSRY. N-linked (GlcNAc...) asparagine glycosylation occurs at Asn313. Positions 328-348 form an intramembrane region, pore-forming; the sequence is VTSLYFTLSTITSIGFGNVSA. At 349 to 354 the chain is on the extracellular side; sequence TTDSEK. A helical membrane pass occupies residues 355–375; the sequence is IFTIIMMILGSLMYASVFGNV. The Cytoplasmic portion of the chain corresponds to 376–829; the sequence is SAIIQRLYSG…TPTQETDTIL (454 aa). 458–559 contacts a nucleoside 3',5'-cyclic phosphate; sequence AFAGSTPGCL…ILRDDLLDVL (102 aa). A disordered region spans residues 601–674; sequence SMNKDRYTTP…PLLRRSTNHH (74 aa). The span at 603-615 shows a compositional bias: basic and acidic residues; sequence NKDRYTTPPDGDH. A compositionally biased stretch (low complexity) spans 640-650; that stretch reads SAGSRSSSRCS.

This sequence belongs to the potassium channel family. H (Eag) (TC 1.A.1.20) subfamily. Kv11.1/KCNH2 sub-subfamily. In terms of assembly, the potassium channel is composed of a homo- or heterotetrameric complex. Interacts with dnj-1; dnj-1 chaperone promotes tetramerization.

It localises to the cell membrane. In terms of biological role, pore-forming (alpha) subunit of voltage-gated inwardly rectifying potassium channel. Channel properties are modulated by cAMP and subunit assembly. Regulates the movements of the male's copulatory spicules before and during male mating behavior. The sequence is that of Potassium voltage-gated channel unc-103 from Caenorhabditis elegans.